The sequence spans 340 residues: Putative inactive cytochrome P450 family member 4Z2 (340 aa).

Over 1–9 (MEPSWLQEL) the chain is Cytoplasmic. A helical; Signal-anchor for type II membrane protein membrane pass occupies residues 10–30 (MAHPFLLLILLCMSLLLFQVI). Over 31–340 (RLYQRRRWTI…AKYPEHQQRC (310 aa)) the chain is Lumenal.

Belongs to the cytochrome P450 family. The cofactor is heme. Detected at low levels in mammary gland and mammary carcinoma.

The protein localises to the membrane. The sequence is that of Putative inactive cytochrome P450 family member 4Z2 (CYP4Z2P) from Homo sapiens (Human).